Here is a 308-residue protein sequence, read N- to C-terminus: MKLVLVVLAFIALVSSVSCTQTGGCSCGQQQSHEQQHHPQQHHPQKQQHQPPPQHHQQQQHQQQQVHMQPQKHQQQQEVHVQQQQQQPQHQQQQQQQQHQQQHQCEGQQQHHQQSQGHVQQHEQSHEQHQGQSHEQQHQQQFQGHDKQQQPQQPQQYQQGQEKSQQQQCHCQEQQQTTRCSYNYYSSSSNLKNCHEFLRQQCSPLVMPFLQSRLIQPSSCQVLQQQCCHDLRQIEPQYIHQAIYNMVQSIIQEEQQQQPCELCGSQQATQSAVAILTAAQYLPSMCGLYHSYYQNNPCSSNDISGVCN.

The N-terminal stretch at 1–19 (MKLVLVVLAFIALVSSVSC) is a signal peptide. Positions 27-159 (CGQQQSHEQQ…QPQQPQQYQQ (133 aa)) are disordered. A compositionally biased stretch (low complexity) spans 55-119 (HHQQQQHQQQ…QHHQQSQGHV (65 aa)). Positions 120-129 (QQHEQSHEQH) are enriched in basic and acidic residues. Positions 130–159 (QGQSHEQQHQQQFQGHDKQQQPQQPQQYQQ) are enriched in low complexity. The GPI-anchor amidated cysteine moiety is linked to residue Cys286. Positions 287-308 (GLYHSYYQNNPCSSNDISGVCN) are cleaved as a propeptide — removed in mature form.

The protein belongs to the gliadin/glutenin family. In terms of assembly, interacts with OP10 (via N-terminus).

The protein resides in the cell membrane. Zeins are major seed storage proteins. The protein is 50 kDa gamma-zein of Zea mays (Maize).